The sequence spans 1593 residues: ABC transporter C family member 8 (1593 aa).

10 consecutive transmembrane segments (helical) span residues 27-47 (VVMT…LYYL), 75-95 (VIVS…IVSI), 100-120 (FEIL…GLVY), 135-155 (LYWV…TLAI), 169-189 (FSYF…VLFF), 280-300 (FYIA…GPTL), 318-338 (YDGL…SLLL), 392-412 (LCPY…SLVL), 419-439 (ASVF…LAIS), and 505-525 (LLLW…VYIL). The 282-residue stretch at 280-561 (FYIAALFKII…LPSVVSSIIE (282 aa)) folds into the ABC transmembrane type-1 1 domain. The ABC transporter 1 domain maps to 594-818 (VKIDNATLEW…GSHFTELMSH (225 aa)). Residue 627–634 (GQVGSGKS) coordinates ATP. Positions 816–938 (MSHDEQQQQL…PLQKGEKSSV (123 aa)) are disordered. Positions 844–875 (GDNKESENNEEQNEEEEGENENLLEKVLRKSR) form a coiled coil. Acidic residues predominate over residues 851 to 865 (NNEEQNEEEEGENEN). A compositionally biased stretch (low complexity) spans 877–886 (RSPSPSSNRN). Residues 905-922 (EEDEQDERELMEDIDIDG) show a composition bias toward acidic residues. 5 helical membrane passes run 1005-1025 (IGVL…LLSI), 1064-1084 (AKYY…ATFL), 1157-1177 (IIVI…VGAL), 1251-1271 (LAIR…LYTV), and 1280-1300 (GTAG…NWMV). Positions 1010–1308 (ATCIIGFYVL…MVRMSCDLEN (299 aa)) constitute an ABC transmembrane type-1 2 domain. Positions 1344–1578 (IVFKNLWLTY…QDSIYYSLVK (235 aa)) constitute an ABC transporter 2 domain. 1378–1385 (GRTGAGKS) contributes to the ATP binding site.

It belongs to the ABC transporter superfamily. ABCC family. Conjugate transporter (TC 3.A.1.208) subfamily.

The protein localises to the membrane. This is ABC transporter C family member 8 (abcC8) from Dictyostelium discoideum (Social amoeba).